The primary structure comprises 975 residues: E3 ubiquitin-protein ligase BRE1A (975 aa).

Positions 1 to 30 (MSGIGNKRAAGEPGTSMPPEKKAAVEDSGT) are disordered. At Lys-21 the chain carries N6-acetyllysine. Phosphoserine is present on Ser-41. Residues 43–90 (TEELDIRTLQTKNRKLAEMLDQRQAIEDELREHIEKLERRQATDDASL) adopt a coiled-coil conformation. Residues 125-155 (KALVVPEPEPDSDSNQERKDDRERGEGQEPA) form a disordered region. Residues Ser-136 and Ser-138 each carry the phosphoserine modification. Positions 139-151 (NQERKDDRERGEG) are enriched in basic and acidic residues. 2 coiled-coil regions span residues 168-375 (EEME…EQVV) and 429-898 (SLHK…TTKK). Residues Lys-348 and Lys-510 each carry the N6-acetyllysine modification. The disordered stretch occupies residues 507 to 622 (DLNKTRLRSG…GKHDDGRKKE (116 aa)). Ser-522 bears the Phosphoserine mark. Residues 527 to 540 (EDPKDEPAELKPDS) show a composition bias toward basic and acidic residues. The span at 543-552 (LSSQSSASKA) shows a compositional bias: low complexity. Over residues 558-622 (NEIKSKRDEE…GKHDDGRKKE (65 aa)) the composition is skewed to basic and acidic residues. Ser-562 is modified (phosphoserine). The RING-type zinc-finger motif lies at 922-961 (CPCCNMRKKDAVLTKCFHVFCFECVKTRYDTRQRKCPKCN).

This sequence belongs to the BRE1 family. Component of the RNF20/40 complex (also known as BRE1 complex) probably composed of 2 copies of RNF20/BRE1A and 2 copies of RNF40/BRE1B. Interacts with UBE2E1/UBCH6. Interacts with p53/TP53 and WAC. Interacts with PAF1; the interaction mediates the association of the PAF1 and RNF20/40 complexes which is a prerequsite for recruitment of UBE2A/B. Interacts with isoform 1 and isoform 2 of PA2G4. Interacts with FBXL19. As to quaternary structure, (Microbial infection) Interacts with human herpesvirus 8 (KSHV) protein RTA/ORF50; this interaction targets the SMC5-SMC6 complex for proteasomal degradation. Expressed in the normal brain and also in malignant gliomas (at protein level).

The protein localises to the nucleus. It carries out the reaction S-ubiquitinyl-[E2 ubiquitin-conjugating enzyme]-L-cysteine + [acceptor protein]-L-lysine = [E2 ubiquitin-conjugating enzyme]-L-cysteine + N(6)-ubiquitinyl-[acceptor protein]-L-lysine.. The protein operates within protein modification; protein ubiquitination. Component of the RNF20/40 E3 ubiquitin-protein ligase complex that mediates monoubiquitination of 'Lys-120' of histone H2B (H2BK120ub1). H2BK120ub1 gives a specific tag for epigenetic transcriptional activation and is also prerequisite for histone H3 'Lys-4' and 'Lys-79' methylation (H3K4me and H3K79me, respectively). It thereby plays a central role inb histone code and gene regulation. The RNF20/40 complex forms a H2B ubiquitin ligase complex in cooperation with the E2 enzyme UBE2A or UBE2B; reports about the cooperation with UBE2E1/UBCH are contradictory. Required for transcriptional activation of Hox genes. Recruited to the MDM2 promoter, probably by being recruited by p53/TP53, and thereby acts as a transcriptional coactivator. Mediates the polyubiquitination of isoform 2 of PA2G4 in cancer cells leading to its proteasome-mediated degradation. Functionally, (Microbial infection) Promotes the human herpesvirus 8 (KSHV) lytic cycle by inducing the expression of lytic viral genes including the latency switch gene RTA/ORF50. In Homo sapiens (Human), this protein is E3 ubiquitin-protein ligase BRE1A (RNF20).